A 67-amino-acid chain; its full sequence is uncharacterized protein (67 aa).

Residues 4–24 form a helical membrane-spanning segment; sequence WIFAILMLGVAIVLSIIATFF.

It localises to the membrane. This is an uncharacterized protein from Bacillus anthracis.